We begin with the raw amino-acid sequence, 177 residues long: ATP-dependent protease subunit HslV (177 aa).

The active site involves Thr-4. Na(+) is bound by residues Ser-159, Cys-162, and Thr-165.

It belongs to the peptidase T1B family. HslV subfamily. In terms of assembly, a double ring-shaped homohexamer of HslV is capped on each side by a ring-shaped HslU homohexamer. The assembly of the HslU/HslV complex is dependent on binding of ATP.

Its subcellular location is the cytoplasm. The catalysed reaction is ATP-dependent cleavage of peptide bonds with broad specificity.. Allosterically activated by HslU binding. Its function is as follows. Protease subunit of a proteasome-like degradation complex believed to be a general protein degrading machinery. The chain is ATP-dependent protease subunit HslV from Mesorhizobium japonicum (strain LMG 29417 / CECT 9101 / MAFF 303099) (Mesorhizobium loti (strain MAFF 303099)).